A 274-amino-acid polypeptide reads, in one-letter code: Large ribosomal subunit protein uL2 (274 aa).

The segment at 222–257 (GVAMNPVDHPHGGGEGRTSGGRHPVSPWGVPTKGYK) is disordered.

It belongs to the universal ribosomal protein uL2 family. As to quaternary structure, part of the 50S ribosomal subunit. Forms a bridge to the 30S subunit in the 70S ribosome.

Functionally, one of the primary rRNA binding proteins. Required for association of the 30S and 50S subunits to form the 70S ribosome, for tRNA binding and peptide bond formation. It has been suggested to have peptidyltransferase activity; this is somewhat controversial. Makes several contacts with the 16S rRNA in the 70S ribosome. In Nitrosococcus oceani (strain ATCC 19707 / BCRC 17464 / JCM 30415 / NCIMB 11848 / C-107), this protein is Large ribosomal subunit protein uL2.